Consider the following 356-residue polypeptide: Phosphotriesterase-related protein (356 aa).

A divalent metal cation-binding residues include histidine 23, histidine 25, glutamate 175, histidine 207, histidine 236, and aspartate 304.

The protein belongs to the metallo-dependent hydrolases superfamily. Phosphotriesterase family. Requires a divalent metal cation as cofactor.

In Aedes aegypti (Yellowfever mosquito), this protein is Phosphotriesterase-related protein.